The chain runs to 193 residues: DNA damage-inducible transcript 4-like protein (193 aa).

The protein belongs to the DDIT4 family. In terms of tissue distribution, up-regulated in atherosclerotic plaques relative to healthy segments of the same artery.

The protein resides in the cytoplasm. Functionally, inhibits cell growth by regulating the TOR signaling pathway upstream of the TSC1-TSC2 complex and downstream of AKT1. The chain is DNA damage-inducible transcript 4-like protein (DDIT4L) from Homo sapiens (Human).